We begin with the raw amino-acid sequence, 464 residues long: MKLVLGNGLVNLSWEYMLSFSILLYFIFTQLIFVFEDHSLAKNLKVIPSEVINALFDNFNKNLNFDKYAYVQYATDFDYLNLAIINFIVLRRSSTKIPNLVVLFNRALQEDKNRFDGLRDLSLRYSVTLKPIPIIENVNAESPTWSKSFTKFHIFNEVKYDRIVYFDADSMLLHTQWNDNSSIVNNESNVPENLDELFTIPEIIDIALPQAYWLTKHTKASGKIKAPDGKGYQDEITALINEISKSVNDSLVFEKLPSLLVQSQKSNHRNNFFATHVMVVKPSNEIFNELKKYVHNPWLWSLHKRHALRNKSDYDMEVLNKFIDNVLQENENFKVGILPHKVYGVLTGEFRELSHESFVSEAQFLPFITGELNEQWRPIEIIRNIKLIHFSDSPIPKPWEGMNNFHFYNKFRIYCHDAGFDADLFNSLFPTSWKPRLTTDCDSVNIWNWIMAEYQKLHNELWMV.

Residues 1–14 (MKLVLGNGLVNLSW) lie on the Cytoplasmic side of the membrane. Residues 15–35 (EYMLSFSILLYFIFTQLIFVF) traverse the membrane as a helical; Signal-anchor for type II membrane protein segment. At 36-464 (EDHSLAKNLK…QKLHNELWMV (429 aa)) the chain is on the lumenal side. Residues 167 to 169 (DAD) carry the DXD motif. Residues asparagine 180, asparagine 186, asparagine 248, and asparagine 310 are each glycosylated (N-linked (GlcNAc...) asparagine).

The protein belongs to the GNT1 family.

It is found in the golgi apparatus membrane. The protein resides in the vacuole membrane. Functionally, N-acetylglucosaminyltransferase involved in the Golgi-specific modification of N-linked glycans. This chain is Glucose N-acetyltransferase 1 (GNT1), found in Debaryomyces hansenii (strain ATCC 36239 / CBS 767 / BCRC 21394 / JCM 1990 / NBRC 0083 / IGC 2968) (Yeast).